The chain runs to 145 residues: Ubiquitin-conjugating enzyme E2 variant 1C (145 aa).

A UBC core domain is found at 12 to 145 (PRNFRLLEEL…LVQPPEGTFF (134 aa)).

The protein belongs to the ubiquitin-conjugating enzyme family. In terms of assembly, heterodimer with UBC35 or UBC36. Expressed in roots, shoots, leaves, stems and flowers, but not in pollen.

Has no ubiquitin ligase activity on its own. The heterodimer with UBC catalyzes the synthesis of non-canonical poly-ubiquitin chains that are linked through 'Lys-63'. This type of poly-ubiquitination does not lead to protein degradation by the proteasome. Mediates transcriptional activation of target genes. May play a role in the control of progress through the cell cycle and differentiation. May play a role in the error-free DNA repair pathway and contributes to the survival of cells after DNA damage. This chain is Ubiquitin-conjugating enzyme E2 variant 1C (UEV1C), found in Arabidopsis thaliana (Mouse-ear cress).